Consider the following 296-residue polypeptide: MKRNLKAIPVLVAGLFTSQLSIAAGSVSADPHAGHDMSAMQMPADENFTEMTSMEPIVTESRTPIPPVTDADRKAAFGNLQGHAIHDSAINYLVLLDQLEWQRSDNTNNFSWSVNSWIGGDTDRIWLKSEGERSNGETEAAEAQLLWGHAVGPWWDLVAGVRQDFRPASARTWAAVGFQGLALYNFESEITGFVSNGGKAALRLGGEYDVLLTNRLILQPSYEVNFYSQDDESRGRGRGLTDTELGLRLRYEIRREFAPYIGVSWNQLYGKTSDMAKREGEKDHQVVFLAGARIWF.

The signal sequence occupies residues methionine 1–alanine 23.

It localises to the cell outer membrane. Required for the copper-inducible expression of copper resistance. This Escherichia coli protein is Copper resistance protein B (pcoB).